Reading from the N-terminus, the 523-residue chain is Pituitary adenylate cyclase-activating polypeptide type I receptor (523 aa).

The first 19 residues, 1-19 (MARVLQLSLTALLLPVAIA), serve as a signal peptide directing secretion. Residues 20–151 (MHSDCIFKKE…SGDQDYYYLS (132 aa)) lie on the Extracellular side of the membrane. 3 cysteine pairs are disulfide-bonded: cysteine 33/cysteine 62, cysteine 53/cysteine 117, and cysteine 76/cysteine 133. 3 N-linked (GlcNAc...) asparagine glycosylation sites follow: asparagine 47, asparagine 59, and asparagine 116. An important for ADCYAP1/PACAP ligand binding and specificity region spans residues 124–138 (EPFPHYFDACGFDDY). The important for ligand binding and specificity stretch occupies residues 124–138 (EPFPHYFDACGFDDY). The chain crosses the membrane as a helical span at residues 152–176 (VKALYTVGYSTSLATLTTAMVILCR). Over 177–186 (FRKLHCTRNF) the chain is Cytoplasmic. The chain crosses the membrane as a helical span at residues 187 to 207 (IHMNLFVSFMLRAISVFIKDW). Residues 208–222 (ILYAEQDSSHCFVST) lie on the Extracellular side of the membrane. Residues 223-248 (VECKAVMVFFHYCVVSNYFWLFIEGL) form a helical membrane-spanning segment. A disulfide bond links cysteine 225 and cysteine 295. Residues 249-266 (YLFTLLVETFFPERRYFY) are Cytoplasmic-facing. A helical membrane pass occupies residues 267–289 (WYTIIGWGTPTVCVTVWAVLRLY). Residues 290 to 301 (FDDAGCWDMNDS) are Extracellular-facing. A helical transmembrane segment spans residues 302–328 (TALWWVIKGPVVGSIMVNFVLFIGIII). Residues 329 to 346 (ILVQKLQSPDMGGNESSI) are Cytoplasmic-facing. The helical transmembrane segment at 347–429 (YLTNLRLRVP…HYTVFAFSPE (83 aa)) threads the bilayer. The Extracellular portion of the chain corresponds to 430–434 (NVSKR). Residues 435-458 (ERLVFELGLGSFQGFVVAVLYCFL) traverse the membrane as a helical segment. The Cytoplasmic segment spans residues 459–523 (NGEVQAEIKR…SSLPADNLAT (65 aa)). Serine 489 and serine 502 each carry phosphoserine.

Belongs to the G-protein coupled receptor 2 family. In terms of assembly, interacts with maxadilan, a vasodilator peptide from Lutzomyia longipalpis saliva; the interaction results in ADCYAP1R1 activation. Hypothalamus, anterior pituitary, adrenal medulla, testicular germ cells.

It localises to the cell membrane. Its function is as follows. G protein-coupled receptor activated by the neuropeptide pituitary adenylate cyclase-activating polypeptide (ADCYAP1/PACAP). Binds both PACAP27 and PACAP38 bioactive peptides. Ligand binding causes a conformation change that triggers signaling via guanine nucleotide-binding proteins (G proteins) and modulates the activity of downstream effectors. Activates cAMP-dependent pathway. May regulate the release of adrenocorticotropin, luteinizing hormone, growth hormone, prolactin, epinephrine, and catecholamine. May play a role in spermatogenesis and sperm motility. Causes smooth muscle relaxation and secretion in the gastrointestinal tract. The protein is Pituitary adenylate cyclase-activating polypeptide type I receptor of Rattus norvegicus (Rat).